We begin with the raw amino-acid sequence, 362 residues long: Peptide chain release factor 1 (362 aa).

At Gln-232 the chain carries N5-methylglutamine.

The protein belongs to the prokaryotic/mitochondrial release factor family. Post-translationally, methylated by PrmC. Methylation increases the termination efficiency of RF1.

The protein localises to the cytoplasm. Peptide chain release factor 1 directs the termination of translation in response to the peptide chain termination codons UAG and UAA. This is Peptide chain release factor 1 from Myxococcus xanthus.